A 378-amino-acid polypeptide reads, in one-letter code: Putative F-box only protein 15 (378 aa).

The 48-residue stretch at 5 to 52 (KRVYRSLPFELVEEILKKTPAESLNRFKSTCKQWYGIITSKRFMYNHL) folds into the F-box domain.

The protein is Putative F-box only protein 15 (FBX15) of Arabidopsis thaliana (Mouse-ear cress).